The following is a 438-amino-acid chain: Iroquois-class homeodomain protein IRX-6 (438 aa).

Positions 143–205 (SAGRRKNATR…NARRRLKKEN (63 aa)) form a DNA-binding region, homeobox. Disordered stretches follow at residues 205 to 270 (NKMT…EAAV) and 388 to 438 (PRDS…GAEG). Positions 214 to 223 (KGGEERKADS) are enriched in basic and acidic residues. Acidic residues predominate over residues 252–268 (LEDLEEEEEEEEAEEEA).

Belongs to the TALE/IRO homeobox family. As to expression, expressed in a subset of retinal ganglion cells and bipolar cells; including in type 2 and type 3a bipolar cells.

The protein localises to the nucleus. Functionally, transcription factor. Binds to the iroquois binding site (IBS) motif of target genes to regulate gene expression; functions as a transcriptional activator or repressor. Modulates expression of RCVRN, VSX1, BHLHE22/BHLHB5 and TACR3/Nk3r. Required downstream of retinal bipolar cell specification for the terminal differentiation of type 2, type 3a and possibly type 6 bipolar cells. This Mus musculus (Mouse) protein is Iroquois-class homeodomain protein IRX-6 (Irx6).